Consider the following 354-residue polypeptide: Protein RecA (354 aa).

67 to 74 (GPESSGKT) serves as a coordination point for ATP.

Belongs to the RecA family.

The protein localises to the cytoplasm. Functionally, can catalyze the hydrolysis of ATP in the presence of single-stranded DNA, the ATP-dependent uptake of single-stranded DNA by duplex DNA, and the ATP-dependent hybridization of homologous single-stranded DNAs. It interacts with LexA causing its activation and leading to its autocatalytic cleavage. The sequence is that of Protein RecA from Chlamydia muridarum (strain MoPn / Nigg).